The sequence spans 349 residues: uncharacterized protein (349 aa).

This is an uncharacterized protein from Archaeoglobus fulgidus (strain ATCC 49558 / DSM 4304 / JCM 9628 / NBRC 100126 / VC-16).